Reading from the N-terminus, the 463-residue chain is Chromosomal replication initiator protein DnaA (463 aa).

Residues 1–83 (MSTNQIILTD…LQLFQHYNNT (83 aa)) form a domain I, interacts with DnaA modulators region. The domain II stretch occupies residues 83–124 (TIKSIEIITKELPGTTQTVTELPTKTFADIGSSELNSENIFS). The interval 125–343 (TLDARFTFDN…GALNKVIAHS (219 aa)) is domain III, AAA+ region. ATP is bound by residues Gly171, Gly173, Lys174, and Thr175. The domain IV, binds dsDNA stretch occupies residues 344–463 (NFTLKEITLE…INLLMKILQN (120 aa)).

The protein belongs to the DnaA family. As to quaternary structure, oligomerizes as a right-handed, spiral filament on DNA at oriC.

It is found in the cytoplasm. Functionally, plays an essential role in the initiation and regulation of chromosomal replication. ATP-DnaA binds to the origin of replication (oriC) to initiate formation of the DNA replication initiation complex once per cell cycle. Binds the DnaA box (a 9 base pair repeat at the origin) and separates the double-stranded (ds)DNA. Forms a right-handed helical filament on oriC DNA; dsDNA binds to the exterior of the filament while single-stranded (ss)DNA is stabiized in the filament's interior. The ATP-DnaA-oriC complex binds and stabilizes one strand of the AT-rich DNA unwinding element (DUE), permitting loading of DNA polymerase. After initiation quickly degrades to an ADP-DnaA complex that is not apt for DNA replication. Binds acidic phospholipids. The polypeptide is Chromosomal replication initiator protein DnaA (Rickettsia peacockii (strain Rustic)).